The sequence spans 387 residues: 2-deoxystreptamine glucosyltransferase (387 aa).

The protein belongs to the glycosyltransferase group 1 family.

It carries out the reaction 2-deoxystreptamine + UDP-N-acetyl-alpha-D-glucosamine = 2'-N-acetylparomamine + UDP + H(+). It catalyses the reaction 2-deoxystreptamine + UDP-alpha-D-glucose = 2'-deamino-2'-hydroxyparomamine + UDP + H(+). The protein operates within antibiotic biosynthesis; kanamycin biosynthesis. In terms of biological role, glycosyltransferase involved in the biosynthesis of kanamycin by mediating conversion of 2-deoxystreptamine (2-DOS) to 2'-N-acetylparomamine using UDP-alpha-D-glucose as sugar donor. Can also accept UDP-alpha-D-glucosamine, but with a much lower activity compared to UDP-alpha-D-glucose. The protein is 2-deoxystreptamine glucosyltransferase (kanF) of Streptomyces kanamyceticus.